An 87-amino-acid polypeptide reads, in one-letter code: U3-theraphotoxin-Cg1b (87 aa).

The N-terminal stretch at 1–23 (MRTLTLIAIVTCAALVIFHAAAA) is a signal peptide. The propeptide occupies 24–48 (EELEAQDVIQPEDIFTGVATLEEDR). Intrachain disulfides connect Cys-52–Cys-65, Cys-56–Cys-79, and Cys-73–Cys-84.

Belongs to the neurotoxin 12 (Hwtx-2) family. 03 (juruin) subfamily. In terms of tissue distribution, expressed by the venom gland.

Its subcellular location is the secreted. In terms of biological role, probable ion channel inhibitor. The chain is U3-theraphotoxin-Cg1b from Chilobrachys guangxiensis (Chinese earth tiger tarantula).